Reading from the N-terminus, the 251-residue chain is Endonuclease NucS (251 aa).

The span at 230 to 240 (LEPPKKGNEKR) shows a compositional bias: basic and acidic residues. The tract at residues 230–251 (LEPPKKGNEKRSKQKTLDFFTP) is disordered.

It belongs to the NucS endonuclease family. Homodimer. Interacts with PCNA.

Its subcellular location is the cytoplasm. With respect to regulation, activity is modulated by PCNA. PCNA increases the binding affinity of NucS towards ssDNA as well as branched DNA substrates carrying either 3' or 5' flaps. PCNA is also required for optimal loading of NucS on its substrates and to direct activity towards ss/dsDNA junction. Functionally, cleaves both 3' and 5' ssDNA extremities of branched DNA structures. Binds to ssDNA. The polypeptide is Endonuclease NucS (Pyrococcus abyssi (strain GE5 / Orsay)).